The sequence spans 161 residues: MPSFDVVSELDKHEVQNAVENAIKELDRRYDLKGKGSFEFKEKEQTVLLTAEAEFQLEAMIEILRLALVKRKIDVKCLETKDAYASGKEMKQEAKFREGIDKELAKKIVAHIKDAKLKVQAAIQGEQVRVTGKKRDDLQEAIAALRAKEFDMPLQFNNFRD.

It belongs to the YajQ family.

Functionally, nucleotide-binding protein. The chain is Nucleotide-binding protein PputW619_0959 from Pseudomonas putida (strain W619).